A 513-amino-acid chain; its full sequence is Light-independent protochlorophyllide reductase subunit B (513 aa).

[4Fe-4S] cluster is bound at residue Asp-36. Residue Asp-274 is the Proton donor of the active site. 409-410 lines the substrate pocket; it reads GL. Residues 426 to 457 form a disordered region; it reads DAAGPSHHGGHSPKPQAAEPAPQAAPQPENTG. Residues 440 to 454 show a composition bias toward low complexity; that stretch reads PQAAEPAPQAAPQPE.

It belongs to the ChlB/BchB/BchZ family. In terms of assembly, protochlorophyllide reductase is composed of three subunits; BchL, BchN and BchB. Forms a heterotetramer of two BchB and two BchN subunits. The cofactor is [4Fe-4S] cluster.

It catalyses the reaction chlorophyllide a + oxidized 2[4Fe-4S]-[ferredoxin] + 2 ADP + 2 phosphate = protochlorophyllide a + reduced 2[4Fe-4S]-[ferredoxin] + 2 ATP + 2 H2O. It participates in porphyrin-containing compound metabolism; bacteriochlorophyll biosynthesis (light-independent). In terms of biological role, component of the dark-operative protochlorophyllide reductase (DPOR) that uses Mg-ATP and reduced ferredoxin to reduce ring D of protochlorophyllide (Pchlide) to form chlorophyllide a (Chlide). This reaction is light-independent. The NB-protein (BchN-BchB) is the catalytic component of the complex. This Roseobacter denitrificans (strain ATCC 33942 / OCh 114) (Erythrobacter sp. (strain OCh 114)) protein is Light-independent protochlorophyllide reductase subunit B.